Here is a 192-residue protein sequence, read N- to C-terminus: 3-hydroxyanthranilate 3,4-dioxygenase (192 aa).

Arg50 contacts O2. 3 residues coordinate Fe cation: His54, Glu60, and His102. A substrate-binding site is contributed by Glu60. Arg106 and Glu116 together coordinate substrate. 4 residues coordinate a divalent metal cation: Cys131, Cys134, Cys168, and Cys171.

It belongs to the 3-HAO family. The cofactor is Fe(2+).

It localises to the cytoplasm. It catalyses the reaction 3-hydroxyanthranilate + O2 = (2Z,4Z)-2-amino-3-carboxymuconate 6-semialdehyde. The protein operates within cofactor biosynthesis; NAD(+) biosynthesis; quinolinate from L-kynurenine: step 3/3. Its function is as follows. Catalyzes the oxidative ring opening of 3-hydroxyanthranilate to 2-amino-3-carboxymuconate semialdehyde, which spontaneously cyclizes to quinolinate. In Coccidioides immitis (strain RS) (Valley fever fungus), this protein is 3-hydroxyanthranilate 3,4-dioxygenase.